The chain runs to 1166 residues: Serine/threonine-protein kinase BRI1-like 1 (1166 aa).

An N-terminal signal peptide occupies residues 1–21 (MKQRWLLVLILCFFTTSLVMG). The Extracellular portion of the chain corresponds to 22–776 (IHGKHLINDD…IHAKKQTVAT (755 aa)). Asparagine 33 carries N-linked (GlcNAc...) asparagine glycosylation. Positions 66 to 73 (CSWRGVSC) match the Cys pair 1 motif. 20 LRR repeats span residues 78 to 99 (RIVGLDLRNSGLTGTLNLVNLT), 103 to 124 (NLQNLYLQGNYFSSGGDSSGSD), 126 to 147 (YLQVLDLSSNSISDYSMVDYVF), 152 to 173 (NLVSVNISNNKLVGKLGFAPSS), 176 to 197 (SLTTVDLSYNILSDKIPESFIS), 202 to 224 (SLKYLDLTHNNLSGDFSDLSFGI), 227 to 248 (NLTFFSLSQNNLSGDKFPITLP), 252 to 274 (FLETLNISRNNLAGKIPNGEYWG), 278 to 300 (NLKQLSLAHNRLSGEIPPELSLL), 303 to 325 (TLVILDLSGNTFSGELPSQFTAC), 327 to 349 (WLQNLNLGNNYLSGDFLNTVVSK), 352 to 375 (GITYLYVAYNNISGSVPISLTNCS), 376 to 397 (NLRVLDLSSNGFTGNVPSGFCS), 403 to 424 (VLEKILIANNYLSGTVPMELGK), 427 to 449 (SLKTIDLSFNELTGPIPKEIWML), 451 to 473 (NLSDLVMWANNLTGTIPEGVCVK), 476 to 498 (NLETLILNNNLLTGSIPESISRC), 500 to 522 (NMIWISLSSNRLTGKIPSGIGNL), 524 to 547 (KLAILQLGNNSLSGNVPRQLGNCK), and 548 to 570 (SLIWLDLNSNNLTGDLPGELASQ). Asparagine 97 carries N-linked (GlcNAc...) asparagine glycosylation. The N-linked (GlcNAc...) asparagine glycan is linked to asparagine 157. Residues asparagine 212, asparagine 227, asparagine 237, and asparagine 257 are each glycosylated (N-linked (GlcNAc...) asparagine). Residues asparagine 362 and asparagine 373 are each glycosylated (N-linked (GlcNAc...) asparagine). Asparagine 451 and asparagine 461 each carry an N-linked (GlcNAc...) asparagine glycan. Residues asparagine 521, asparagine 532, asparagine 558, and asparagine 638 are each glycosylated (N-linked (GlcNAc...) asparagine). LRR repeat units lie at residues 664–686 (YLQVLNLGHNRITGTIPDSFGGL), 688–710 (AIGVLDLSHNNLQGYLPGSLGSL), and 712–734 (FLSDLDVSNNNLTGPIPFGGQLT). 2 N-linked (GlcNAc...) asparagine glycosylation sites follow: asparagine 722 and asparagine 743. A Cys pair 2 motif is present at residues 748–755 (CGVPLRPC). Residues 777–797 (AVIAGIAFSFMCFVMLVMALY) form a helical membrane-spanning segment. Topologically, residues 798–1166 (RVRKVQKKEQ…LVEESRDKEP (369 aa)) are cytoplasmic. Threonine 848 and threonine 856 each carry phosphothreonine. One can recognise a Protein kinase domain in the interval 859-1147 (FSAETMVGSG…KADTEEDESL (289 aa)). ATP is bound by residues 865–873 (VGSGGFGEV) and lysine 887. Phosphotyrosine is present on tyrosine 932. The active-site Proton acceptor is the aspartate 987. Serine 1022 carries the phosphoserine modification. Tyrosine 1030 carries the post-translational modification Phosphotyrosine. Phosphothreonine is present on threonine 1141. The segment at 1142–1166 (EEDESLDEFSLKETPLVEESRDKEP) is disordered.

The protein belongs to the protein kinase superfamily. Ser/Thr protein kinase family. Predominantly expressed in vascular tissues. From 7 day old seedlings, it is expressed in the columella cells of the root tip, in the vascular initials in the meristematic region of the root and in vascular tissues. After germination, it is expressed in the stele cell and in the early differentiation zone of the root, where the expression continues from the root to the hypocotyls and cotyledons following the midvein. In mature plants, it is expressed in the vasculature of the leaf, predominantly in the midvein, and in the vascular bundles of inflorescence stems. Localizes to procambial cells of the vascular bundles located between the differentiating xylem and the phloem.

Its subcellular location is the cell membrane. It catalyses the reaction L-seryl-[protein] + ATP = O-phospho-L-seryl-[protein] + ADP + H(+). The enzyme catalyses L-threonyl-[protein] + ATP = O-phospho-L-threonyl-[protein] + ADP + H(+). Functionally, receptor with a serine/threonine-protein kinase activity. Regulates, in response to brassinosteroid binding, a signaling cascade involved in plant development. Binds brassinolide. May be involved in cell growth and vascular differentiation. This is Serine/threonine-protein kinase BRI1-like 1 (BRL1) from Arabidopsis thaliana (Mouse-ear cress).